A 349-amino-acid chain; its full sequence is Protein arginine N-methyltransferase 6 (349 aa).

The region spanning 17–324 is the SAM-dependent MTase PRMT-type domain; that stretch reads DYMYFDSYSD…EENSRHICIR (308 aa). Positions 30, 39, 63, 85, and 114 each coordinate S-adenosyl-L-methionine. Active-site residues include E128 and E137.

This sequence belongs to the class I-like SAM-binding methyltransferase superfamily. Protein arginine N-methyltransferase family. PRMT6 subfamily.

Its subcellular location is the nucleus. The catalysed reaction is L-arginyl-[protein] + 2 S-adenosyl-L-methionine = N(omega),N(omega)-dimethyl-L-arginyl-[protein] + 2 S-adenosyl-L-homocysteine + 2 H(+). Arginine methyltransferase that can catalyze the formation of both omega-N monomethylarginine (MMA) and asymmetrical dimethylarginine (aDMA), with a strong preference for the formation of aDMA. Preferentially methylates arginyl residues present in a glycine and arginine-rich domain and displays preference for monomethylated substrates. Specifically mediates the asymmetric dimethylation of histone H3 'Arg-2' to form H3R2me2a. H3R2me2a represents a specific tag for epigenetic transcriptional repression and is mutually exclusive with methylation on histone H3 'Lys-4' (H3K4me2 and H3K4me3). Acts as a transcriptional repressor of various genes such as HOXA2, THBS1 and TP53. Repression of TP53 blocks cellular senescence. Also methylates histone H2A and H4 'Arg-3' (H2AR3me and H4R3me, respectively). Acts as a regulator of DNA base excision during DNA repair by mediating the methylation of DNA polymerase beta (POLB), leading to the stimulation of its polymerase activity by enhancing DNA binding and processivity. Methylates HMGA1. Regulates alternative splicing events. Acts as a transcriptional coactivator of a number of steroid hormone receptors including ESR1, ESR2, PGR and NR3C1. The polypeptide is Protein arginine N-methyltransferase 6 (prmt6) (Danio rerio (Zebrafish)).